A 254-amino-acid chain; its full sequence is Thiazole synthase (254 aa).

Lysine 95 (schiff-base intermediate with DXP) is an active-site residue. 1-deoxy-D-xylulose 5-phosphate-binding positions include glycine 156, 182-183 (AG), and 204-205 (NT).

This sequence belongs to the ThiG family. Homotetramer. Forms heterodimers with either ThiH or ThiS.

It is found in the cytoplasm. The catalysed reaction is [ThiS sulfur-carrier protein]-C-terminal-Gly-aminoethanethioate + 2-iminoacetate + 1-deoxy-D-xylulose 5-phosphate = [ThiS sulfur-carrier protein]-C-terminal Gly-Gly + 2-[(2R,5Z)-2-carboxy-4-methylthiazol-5(2H)-ylidene]ethyl phosphate + 2 H2O + H(+). Its pathway is cofactor biosynthesis; thiamine diphosphate biosynthesis. In terms of biological role, catalyzes the rearrangement of 1-deoxy-D-xylulose 5-phosphate (DXP) to produce the thiazole phosphate moiety of thiamine. Sulfur is provided by the thiocarboxylate moiety of the carrier protein ThiS. In vitro, sulfur can be provided by H(2)S. This chain is Thiazole synthase, found in Shewanella piezotolerans (strain WP3 / JCM 13877).